A 269-amino-acid chain; its full sequence is Tryptophan synthase alpha chain (269 aa).

Active-site proton acceptor residues include Glu49 and Asp60.

It belongs to the TrpA family. In terms of assembly, tetramer of two alpha and two beta chains.

It catalyses the reaction (1S,2R)-1-C-(indol-3-yl)glycerol 3-phosphate + L-serine = D-glyceraldehyde 3-phosphate + L-tryptophan + H2O. It participates in amino-acid biosynthesis; L-tryptophan biosynthesis; L-tryptophan from chorismate: step 5/5. Its function is as follows. The alpha subunit is responsible for the aldol cleavage of indoleglycerol phosphate to indole and glyceraldehyde 3-phosphate. In Pseudomonas fluorescens (strain SBW25), this protein is Tryptophan synthase alpha chain.